A 26-amino-acid chain; its full sequence is M-poneritoxin-Ng1c (26 aa).

As to expression, expressed by the venom gland.

The protein resides in the secreted. The protein localises to the target cell membrane. Its function is as follows. Has a broad spectrum of activity against both Gram-positive and Gram-negative bacteria and S.cerevisiae. Has insecticidal and hemolytic activities. May act by disrupting the integrity of the bacterial cell membrane. This chain is M-poneritoxin-Ng1c, found in Neoponera goeldii (Ponerine ant).